The following is a 291-amino-acid chain: Protease HtpX (291 aa).

2 helical membrane-spanning segments follow: residues 4–24 (ILLFLATNLAVLVIASITLKL) and 36–56 (GSLLVFCAVFGFAGSLVSLFI). Histidine 142 serves as a coordination point for Zn(2+). Glutamate 143 is an active-site residue. Histidine 146 is a Zn(2+) binding site. The next 2 helical transmembrane spans lie at 150-170 (GDMVTLALIQGVVNTFVMFFA) and 193-213 (FVATIFAELVLGILASIIVMW). Glutamate 219 provides a ligand contact to Zn(2+).

It belongs to the peptidase M48B family. The cofactor is Zn(2+).

Its subcellular location is the cell inner membrane. The chain is Protease HtpX from Pseudomonas aeruginosa (strain LESB58).